We begin with the raw amino-acid sequence, 292 residues long: 4-hydroxy-tetrahydrodipicolinate synthase (292 aa).

A pyruvate-binding site is contributed by Thr48. Tyr136 (proton donor/acceptor) is an active-site residue. The active-site Schiff-base intermediate with substrate is Lys164. Position 204 (Ile204) interacts with pyruvate.

It belongs to the DapA family. In terms of assembly, homotetramer; dimer of dimers.

The protein localises to the cytoplasm. The catalysed reaction is L-aspartate 4-semialdehyde + pyruvate = (2S,4S)-4-hydroxy-2,3,4,5-tetrahydrodipicolinate + H2O + H(+). It functions in the pathway amino-acid biosynthesis; L-lysine biosynthesis via DAP pathway; (S)-tetrahydrodipicolinate from L-aspartate: step 3/4. Its function is as follows. Catalyzes the condensation of (S)-aspartate-beta-semialdehyde [(S)-ASA] and pyruvate to 4-hydroxy-tetrahydrodipicolinate (HTPA). In Acetivibrio thermocellus (strain ATCC 27405 / DSM 1237 / JCM 9322 / NBRC 103400 / NCIMB 10682 / NRRL B-4536 / VPI 7372) (Clostridium thermocellum), this protein is 4-hydroxy-tetrahydrodipicolinate synthase.